The following is a 480-amino-acid chain: Dimethyl-sulfide monooxygenase (480 aa).

Asp58, Thr104, His154, Tyr158, and Ser230 together coordinate FMN. The disordered stretch occupies residues 423 to 480 (QDSYKPGSLRRKLIGTNDGRVESTHPAAQYRDAYVGKESVADRTQPSPFANAKAPVAE).

It belongs to the NtaA/SnaA/DszA monooxygenase family. In terms of assembly, heterodimer of 2 subunits, DmoA and DmoB. FMN is required as a cofactor.

The catalysed reaction is dimethyl sulfide + NADH + O2 + H(+) = methanethiol + formaldehyde + NAD(+) + H2O. With respect to regulation, inhibited by umbelliferone, 8-anilinonaphthalenesulfonate, a range of metal-chelating agents, and Hg(2+), Cd(2+) and Pb(2+) ions. In terms of biological role, monooxygenase that mediates oxidation of dimethyl sulfide, the first step in dimethyl sulfide degradation pathway. Has much lower activity with diethyl sulfide and other short-chain alkyl methyl sulfides. The sequence is that of Dimethyl-sulfide monooxygenase (dmoA) from Hyphomicrobium sulfonivorans.